The chain runs to 115 residues: NAD(P)H-quinone oxidoreductase subunit M (115 aa).

It belongs to the complex I NdhM subunit family. NDH-1 can be composed of about 15 different subunits; different subcomplexes with different compositions have been identified which probably have different functions.

It localises to the cellular thylakoid membrane. It catalyses the reaction a plastoquinone + NADH + (n+1) H(+)(in) = a plastoquinol + NAD(+) + n H(+)(out). The enzyme catalyses a plastoquinone + NADPH + (n+1) H(+)(in) = a plastoquinol + NADP(+) + n H(+)(out). Its function is as follows. NDH-1 shuttles electrons from an unknown electron donor, via FMN and iron-sulfur (Fe-S) centers, to quinones in the respiratory and/or the photosynthetic chain. The immediate electron acceptor for the enzyme in this species is believed to be plastoquinone. Couples the redox reaction to proton translocation, and thus conserves the redox energy in a proton gradient. Cyanobacterial NDH-1 also plays a role in inorganic carbon-concentration. This chain is NAD(P)H-quinone oxidoreductase subunit M, found in Prochlorococcus marinus (strain MIT 9312).